The primary structure comprises 213 residues: Pyridoxine/pyridoxamine 5'-phosphate oxidase (213 aa).

Residues 8-11 (RKNY) and Lys-66 each bind substrate. FMN is bound by residues 61–66 (RIVLIK), 76–77 (FT), Arg-82, Lys-83, and Gln-105. 3 residues coordinate substrate: Tyr-123, Arg-127, and Ser-131. Residues 140–141 (QS) and Trp-184 contribute to the FMN site. A substrate-binding site is contributed by 190 to 192 (RLH). Residue Arg-194 coordinates FMN.

It belongs to the pyridoxamine 5'-phosphate oxidase family. Homodimer. The cofactor is FMN.

The enzyme catalyses pyridoxamine 5'-phosphate + O2 + H2O = pyridoxal 5'-phosphate + H2O2 + NH4(+). It catalyses the reaction pyridoxine 5'-phosphate + O2 = pyridoxal 5'-phosphate + H2O2. The protein operates within cofactor metabolism; pyridoxal 5'-phosphate salvage; pyridoxal 5'-phosphate from pyridoxamine 5'-phosphate: step 1/1. Its pathway is cofactor metabolism; pyridoxal 5'-phosphate salvage; pyridoxal 5'-phosphate from pyridoxine 5'-phosphate: step 1/1. In terms of biological role, catalyzes the oxidation of either pyridoxine 5'-phosphate (PNP) or pyridoxamine 5'-phosphate (PMP) into pyridoxal 5'-phosphate (PLP). The polypeptide is Pyridoxine/pyridoxamine 5'-phosphate oxidase (Paraburkholderia xenovorans (strain LB400)).